The following is a 189-amino-acid chain: Fine tangled pili major subunit (189 aa).

The protein belongs to the Dps family. As to quaternary structure, hexamer.

The protein resides in the fimbrium. Its function is as follows. May contribute to bacterial adherence, or be involved in the protection of the bacteria, or both. This chain is Fine tangled pili major subunit (ftpA), found in Haemophilus ducreyi (strain 35000HP / ATCC 700724).